Here is a 238-residue protein sequence, read N- to C-terminus: Ribonuclease PH (238 aa).

Phosphate is bound by residues R86 and 124–126 (GTR).

This sequence belongs to the RNase PH family. In terms of assembly, homohexameric ring arranged as a trimer of dimers.

The enzyme catalyses tRNA(n+1) + phosphate = tRNA(n) + a ribonucleoside 5'-diphosphate. Phosphorolytic 3'-5' exoribonuclease that plays an important role in tRNA 3'-end maturation. Removes nucleotide residues following the 3'-CCA terminus of tRNAs; can also add nucleotides to the ends of RNA molecules by using nucleoside diphosphates as substrates, but this may not be physiologically important. Probably plays a role in initiation of 16S rRNA degradation (leading to ribosome degradation) during starvation. In Marinobacter nauticus (strain ATCC 700491 / DSM 11845 / VT8) (Marinobacter aquaeolei), this protein is Ribonuclease PH.